Reading from the N-terminus, the 151-residue chain is Single-stranded DNA-binding protein, mitochondrial (151 aa).

The N-terminal 16 residues, 1-16, are a transit peptide targeting the mitochondrion; the sequence is MFRRPVLQVFRQFVRQ. The SSB domain occupies 30 to 141; that stretch reads LNRVQLLGRV…IIADNIIFLS (112 aa). Ser-67 and Ser-79 each carry phosphoserine. Residue Lys-113 is modified to N6-acetyllysine. The residue at position 122 (Lys-122) is an N6-succinyllysine.

In terms of assembly, homotetramer. Interacts with MPG/AAG, through inhibition of its glycosylase activity it potentially prevents formation of DNA breaks in ssDNA, ensuring that base removal primarily occurs in dsDNA. Interacts with POLDIP2. Interacts with PRIMPOL.

It is found in the mitochondrion. Its subcellular location is the mitochondrion matrix. The protein resides in the mitochondrion nucleoid. Its function is as follows. Binds preferentially and cooperatively to pyrimidine rich single-stranded DNA (ss-DNA). In vitro, required to maintain the copy number of mitochondrial DNA (mtDNA) and plays a crucial role during mtDNA replication by stimulating the activity of the replisome components POLG and TWNK at the replication fork. Promotes the activity of the gamma complex polymerase POLG, largely by organizing the template DNA and eliminating secondary structures to favor ss-DNA conformations that facilitate POLG activity. In addition it is able to promote the 5'-3' unwinding activity of the mtDNA helicase TWNK. May also function in mtDNA repair. The polypeptide is Single-stranded DNA-binding protein, mitochondrial (Ssbp1) (Rattus norvegicus (Rat)).